The primary structure comprises 236 residues: Activating transcription factor of chaperone (236 aa).

The segment at 117 to 185 (HRASQLASPQ…KNAATRYRQK (69 aa)) is disordered. Residues 120–137 (SQLASPQHSSSSANASPR) show a composition bias toward low complexity. The segment covering 162–175 (RPVDDRRSRKKEQN) has biased composition (basic and acidic residues). The 64-residue stretch at 165 to 228 (DDRRSRKKEQ…RYLKALMRDL (64 aa)) folds into the bZIP domain. The interval 167–187 (RRSRKKEQNKNAATRYRQKKK) is basic motif. The tract at residues 193–228 (LLKEEQTLRQRHTELGEKCSDLQREIRYLKALMRDL) is leucine-zipper.

This sequence belongs to the bZIP family. Binds DNA as a dimer.

It is found in the nucleus. Transcriptional activator that acts in the unfolded protein response (UPR) pathway. Acts during endoplasmic reticulum (ER) stress by activating UPR target genes via direct binding to the UPR element (UPRE) (5'-GGAACTGGACAGCGTGTCGAAA-3'). Activates expression of ER chaperones ERP72 and PDI. This chain is Activating transcription factor of chaperone, found in Bombyx mori (Silk moth).